The primary structure comprises 388 residues: Succinate--CoA ligase [ADP-forming] subunit beta (388 aa).

The ATP-grasp domain maps to 9-244; sequence KQLFAEYGLP…PSQEDEREAH (236 aa). ATP contacts are provided by residues Lys-46, 53–55, Glu-99, Thr-102, and Glu-107; that span reads GRG. Mg(2+) contacts are provided by Asn-199 and Asp-213. Residues Asn-264 and 321–323 each bind substrate; that span reads GIV.

Belongs to the succinate/malate CoA ligase beta subunit family. As to quaternary structure, heterotetramer of two alpha and two beta subunits. Mg(2+) is required as a cofactor.

It carries out the reaction succinate + ATP + CoA = succinyl-CoA + ADP + phosphate. The enzyme catalyses GTP + succinate + CoA = succinyl-CoA + GDP + phosphate. The protein operates within carbohydrate metabolism; tricarboxylic acid cycle; succinate from succinyl-CoA (ligase route): step 1/1. In terms of biological role, succinyl-CoA synthetase functions in the citric acid cycle (TCA), coupling the hydrolysis of succinyl-CoA to the synthesis of either ATP or GTP and thus represents the only step of substrate-level phosphorylation in the TCA. The beta subunit provides nucleotide specificity of the enzyme and binds the substrate succinate, while the binding sites for coenzyme A and phosphate are found in the alpha subunit. This is Succinate--CoA ligase [ADP-forming] subunit beta from Saccharophagus degradans (strain 2-40 / ATCC 43961 / DSM 17024).